Consider the following 169-residue polypeptide: Cell division inhibitor SulA (169 aa).

Residues 106–112 (ALRTGNY) form a ftsZ binding region. Residues 162 to 169 (KIHSNLYH) are lon protease binding.

It belongs to the SulA family. Interacts with FtsZ. Is rapidly cleaved and degraded by the Lon protease once DNA damage is repaired.

Component of the SOS system and an inhibitor of cell division. Accumulation of SulA causes rapid cessation of cell division and the appearance of long, non-septate filaments. In the presence of GTP, binds a polymerization-competent form of FtsZ in a 1:1 ratio, thus inhibiting FtsZ polymerization and therefore preventing it from participating in the assembly of the Z ring. This mechanism prevents the premature segregation of damaged DNA to daughter cells during cell division. In Salmonella choleraesuis (strain SC-B67), this protein is Cell division inhibitor SulA.